The primary structure comprises 374 residues: Methionine import ATP-binding protein MetN 2 (374 aa).

A disordered region spans residues 1 to 22; it reads MSVATLQRKLPEAAPRRAGQTE. The region spanning 32 to 271 is the ABC transporter domain; the sequence is VRFIGLGKTY…PQHEVSKTLL (240 aa). 68–75 contributes to the ATP binding site; that stretch reads GRSGAGKS.

This sequence belongs to the ABC transporter superfamily. Methionine importer (TC 3.A.1.24) family. As to quaternary structure, the complex is composed of two ATP-binding proteins (MetN), two transmembrane proteins (MetI) and a solute-binding protein (MetQ).

The protein localises to the cell inner membrane. It carries out the reaction L-methionine(out) + ATP + H2O = L-methionine(in) + ADP + phosphate + H(+). The enzyme catalyses D-methionine(out) + ATP + H2O = D-methionine(in) + ADP + phosphate + H(+). Its function is as follows. Part of the ABC transporter complex MetNIQ involved in methionine import. Responsible for energy coupling to the transport system. The polypeptide is Methionine import ATP-binding protein MetN 2 (Pseudomonas fluorescens (strain ATCC BAA-477 / NRRL B-23932 / Pf-5)).